The chain runs to 1679 residues: [F-actin]-monooxygenase mical2b (1679 aa).

Residues 2-494 (GETEEERTSQ…RHLFISGEQD (493 aa)) are monooxygenase domain. FAD-binding positions include Cys97, 97 to 125 (CGFR…SRNN), Glu116, Arg118, Arg123, Asn125, and Asp398. Positions 516–619 (EVRPGRLLLW…MVLYLSKFYE (104 aa)) constitute a Calponin-homology (CH) domain. The Nuclear localization signal signature appears at 658 to 679 (RKRIPKLDKKLEESDVNRKRKK). Disordered stretches follow at residues 661–772 (IPKL…KAKW), 818–838 (SAYK…TPTL), 874–907 (SSLF…ESST), 1073–1163 (STRH…RSTA), 1194–1247 (KPED…DEIP), 1259–1283 (EYPK…ISFS), 1302–1342 (DLTN…PAPP), and 1473–1509 (RNKA…KKKE). Basic and acidic residues-rich tracts occupy residues 662-674 (PKLD…SDVN) and 697-707 (GEREEQKENKV). Residues 874-888 (SSLFTGNPAQPQTDE) show a composition bias toward polar residues. The LIM zinc-binding domain maps to 1011–1073 (DTCVFCQKRV…KMHFSQRKTS (63 aa)). Residues 1086–1099 (IRSSSITISNHTST) are compositionally biased toward low complexity. Residues 1112–1123 (DSSTQQDLQTLP) are compositionally biased toward polar residues. The segment covering 1133–1143 (EVKDSSKKADP) has biased composition (basic and acidic residues). Residues 1144 to 1154 (ADSAPACPDSP) are compositionally biased toward low complexity. The span at 1202-1211 (LAEEDGNSDF) shows a compositional bias: acidic residues. Polar residues predominate over residues 1220–1242 (SKKPSNPSTDSNCLPTKDNSSTP). Residues 1259-1270 (EYPKPSSSSPEP) are compositionally biased toward low complexity. Residues 1302 to 1325 (DLTNPGKSGAEEQQQQHVKPSISL) are compositionally biased toward polar residues. The span at 1333–1342 (THPQPEPAPP) shows a compositional bias: pro residues. Residues 1475 to 1489 (KASAQQQQQQKSNSS) show a composition bias toward low complexity. The 151-residue stretch at 1517–1667 (KSDELKRLHR…EKAEDRDLES (151 aa)) folds into the bMERB domain.

Belongs to the Mical family. FAD serves as cofactor.

It is found in the nucleus. It localises to the cytoplasm. The enzyme catalyses L-methionyl-[F-actin] + NADPH + O2 + H(+) = L-methionyl-(R)-S-oxide-[F-actin] + NADP(+) + H2O. Nuclear monooxygenase that promotes depolymerization of F-actin by mediating oxidation of specific methionine residues on actin and regulates the srf signaling. Acts by modifying nuclear actin subunits through the addition of oxygen to form methionine-sulfoxide, leading to promote actin filament severing and prevent repolymerization. Acts as a key regulator of the srf signaling pathway elicited by nerve growth factor and serum: mediates oxidation and subsequent depolymerization of nuclear actin, leading to increase mkl1/mrtf-a presence in the nucleus and promote srf:mkl1/mrtf-a-dependent gene transcription. The chain is [F-actin]-monooxygenase mical2b from Danio rerio (Zebrafish).